The primary structure comprises 161 residues: Phosphopantetheine adenylyltransferase (161 aa).

Residue threonine 10 coordinates substrate. ATP-binding positions include 10-11 (TF) and histidine 18. 3 residues coordinate substrate: lysine 42, methionine 74, and arginine 88. ATP contacts are provided by residues 89-91 (GLR), glutamate 99, and 124-130 (WSFISSS).

It belongs to the bacterial CoaD family. As to quaternary structure, homohexamer. Mg(2+) serves as cofactor.

It localises to the cytoplasm. It carries out the reaction (R)-4'-phosphopantetheine + ATP + H(+) = 3'-dephospho-CoA + diphosphate. It participates in cofactor biosynthesis; coenzyme A biosynthesis; CoA from (R)-pantothenate: step 4/5. In terms of biological role, reversibly transfers an adenylyl group from ATP to 4'-phosphopantetheine, yielding dephospho-CoA (dPCoA) and pyrophosphate. The protein is Phosphopantetheine adenylyltransferase of Serratia marcescens.